The chain runs to 409 residues: MSKVVERFLKYVKYHTTSDENSNTFPSTEGQLIFARELAKELKELGLSEVEVDENGYVTALLSANTDKKIPTIGFIAHMDTSPDMCGKDVKPQIIENYDGNDIVLNKEKGIILSTSEFPELKNYIGKTLITTDGTTLLGADDKAGIAEIITAIEYLINHPEIEHGNVKIAFTPDEEIGRGVDKFNVKKFACDFAYTVDGGELGTIEYENFNAASAKIKIHGRNVHPGTAKGKMKNSILIGIELQNMLPELERPEHTEGYQGFYHLNNFQGTVEETSMYYIIRDFDKQAFSDKKEYIKSIVEALNKKYGEGTVELELKDQYYNMREVIEKHMHIVETAMEAMRSLGIEPKVVPIRGGTDGARLSFMGLPTPNLFTGGHNFHGKYEFIPIHAMEKAVEVIVKIVELYGKKG.

H78 contacts Zn(2+). D80 is a catalytic residue. D141 serves as a coordination point for Zn(2+). E175 serves as the catalytic Proton acceptor. Residues E176, D198, and H380 each coordinate Zn(2+).

It belongs to the peptidase M20B family. The cofactor is Zn(2+).

It localises to the cytoplasm. It catalyses the reaction Release of the N-terminal residue from a tripeptide.. Functionally, cleaves the N-terminal amino acid of tripeptides. The chain is Peptidase T from Caldanaerobacter subterraneus subsp. tengcongensis (strain DSM 15242 / JCM 11007 / NBRC 100824 / MB4) (Thermoanaerobacter tengcongensis).